A 457-amino-acid polypeptide reads, in one-letter code: Dihydrolipoyllysine-residue acetyltransferase component of pyruvate dehydrogenase complex, mitochondrial (457 aa).

A mitochondrion-targeting transit peptide spans 1-30 (MLSAALRRRVLAPTHSALRTGFAAHVVRHY). Positions 36-112 (HQVIKMPALS…PVGSPIAVLV (77 aa)) constitute a Lipoyl-binding domain. Lysine 77 carries the N6-lipoyllysine modification. Positions 129-168 (AGGDAAKPAAPKKEEKSESKSESASAPEPTPEPQQYQSQG) are disordered. Residues 139–149 (PKKEEKSESKS) show a composition bias toward basic and acidic residues. Lysine 148 carries the N6-crotonyllysine modification. The region spanning 179–216 (NISASAKRLAREKGISIDGLKGTGKNGQITEEDVKKAI) is the Peripheral subunit-binding (PSBD) domain. Active-site residues include histidine 430 and aspartate 434.

It belongs to the 2-oxoacid dehydrogenase family. In terms of assembly, eukaryotic pyruvate dehydrogenase (PDH) complexes are organized as a core consisting of the oligomeric dihydrolipoamide acetyl-transferase (E2), around which are arranged multiple copies of pyruvate dehydrogenase (E1), dihydrolipoamide dehydrogenase (E3) and protein X (E3BP) bound by non-covalent bonds. Interacts with SIR5; the interaction is direct. (R)-lipoate serves as cofactor. Post-translationally, decrotonylated at 'Lys-148' by SIR5, which inhibits the activity of the pyruvate dehydrogenase complex (PDC).

The protein resides in the mitochondrion matrix. The catalysed reaction is N(6)-[(R)-dihydrolipoyl]-L-lysyl-[protein] + acetyl-CoA = N(6)-[(R)-S(8)-acetyldihydrolipoyl]-L-lysyl-[protein] + CoA. In terms of biological role, the pyruvate dehydrogenase complex catalyzes the overall conversion of pyruvate to acetyl-CoA and CO(2). High pyruvate dehydrogenase complex activity is required for sufficient energy production during germination of conidia. In Fusarium oxysporum f. sp. lycopersici (strain 4287 / CBS 123668 / FGSC 9935 / NRRL 34936) (Fusarium vascular wilt of tomato), this protein is Dihydrolipoyllysine-residue acetyltransferase component of pyruvate dehydrogenase complex, mitochondrial.